A 226-amino-acid chain; its full sequence is Ribosomal RNA small subunit methyltransferase G (226 aa).

S-adenosyl-L-methionine is bound by residues Gly-83, Phe-88, Ile-136 to Glu-137, and Arg-152. The tract at residues Phe-199–Arg-226 is disordered.

The protein belongs to the methyltransferase superfamily. RNA methyltransferase RsmG family.

Its subcellular location is the cytoplasm. It catalyses the reaction guanosine(527) in 16S rRNA + S-adenosyl-L-methionine = N(7)-methylguanosine(527) in 16S rRNA + S-adenosyl-L-homocysteine. In terms of biological role, specifically methylates the N7 position of guanine in position 527 of 16S rRNA. This chain is Ribosomal RNA small subunit methyltransferase G, found in Parvibaculum lavamentivorans (strain DS-1 / DSM 13023 / NCIMB 13966).